We begin with the raw amino-acid sequence, 761 residues long: Neurotrypsin (761 aa).

The first 21 residues, 1 to 21 (MALARCVLAVILGALSVVARA), serve as a signal peptide directing secretion. Positions 25 to 87 (SRSPLHRPHP…PPTIPRRCGA (63 aa)) are disordered. Low complexity predominate over residues 38–48 (RSQHAHYLPSS). In terms of domain architecture, Kringle spans 85 to 157 (CGAGESWGNA…GKVDWGYCDC (73 aa)). Disulfide bonds link Cys-85–Cys-157, Cys-101–Cys-141, Cys-130–Cys-155, Cys-191–Cys-255, Cys-204–Cys-265, Cys-235–Cys-245, Cys-298–Cys-361, Cys-311–Cys-371, Cys-341–Cys-351, Cys-411–Cys-475, Cys-424–Cys-485, Cys-455–Cys-465, Cys-505–Cys-636, Cys-547–Cys-563, Cys-651–Cys-717, Cys-680–Cys-694, and Cys-707–Cys-736. Asn-93 is a glycosylation site (N-linked (GlcNAc...) asparagine). 3 consecutive SRCR domains span residues 166–267 (IRLV…SCVP), 273–373 (IRLA…TCYP), and 386–487 (IRLV…ICDY). The segment at 505-516 (CGLRLLHRRQKR) is zymogen activation region. The region spanning 517–760 (IIGGNNSLRG…FVPWIKSVTS (244 aa)) is the Peptidase S1 domain. A glycan (N-linked (GlcNAc...) asparagine) is linked at Asn-521. The Charge relay system role is filled by His-562. Asn-569 carries an N-linked (GlcNAc...) asparagine glycan. The active-site Charge relay system is the Asp-612. Ser-711 serves as the catalytic Charge relay system.

The protein belongs to the peptidase S1 family. In terms of tissue distribution, most abundant in cerebral cortex, hippocampus and amygdala.

The protein localises to the secreted. Functionally, plays a role in neuronal plasticity and the proteolytic action may subserve structural reorganizations associated with learning and memory operations. The polypeptide is Neurotrypsin (Prss12) (Mus musculus (Mouse)).